The primary structure comprises 430 residues: Replication protein A 32 kDa subunit C (430 aa).

A disordered region spans residues 14-46 (MPSQRSGAPAPEYSAAGTGAAAAPSPSKPRDPR). Residues 23 to 38 (APEYSAAGTGAAAAPS) show a composition bias toward low complexity. The OB DNA-binding region spans 86-160 (VRVLGRVVSV…QGLARSIRPI (75 aa)).

This sequence belongs to the replication factor A protein 2 family. In terms of assembly, heterotrimer of RPA1, RPA2 and RPA3 (canonical replication protein A complex). Interacts with RPA1C and RPA3. Phosphorylated in a cell-cycle-dependent manner (from the S phase until mitosis). In response to DNA damage, recruited to DNA-repair nuclear foci, as a hypophosphorylated form.

It localises to the nucleus. In terms of biological role, component of the replication protein A complex (RPA) required for DNA recombination, repair and replication. The activity of RPA is mediated by single-stranded DNA binding and protein interactions. The chain is Replication protein A 32 kDa subunit C (RPA2C) from Oryza sativa subsp. japonica (Rice).